A 600-amino-acid chain; its full sequence is Sulfite reductase [NADPH] flavoprotein alpha-component (600 aa).

Residues 63–201 form the Flavodoxin-like domain; it reads ITLISASQTG…VADQWRKQLT (139 aa). FMN contacts are provided by residues 69–74, 116–119, and 152–161; these read SQTGNA, STQG, and LGDTSYERFC. Residues 235-449 enclose the FAD-binding FR-type domain; it reads QAPLTAALAT…IEHNDNFRLP (215 aa). FAD is bound by residues T323, H357, 387–390, 405–407, Y411, and 420–423; these read RLYS, TVG, and GGAS. NADP(+) is bound by residues 520–521, 526–530, and D562; these read SR and KIYVQ. Y600 is a binding site for FAD.

This sequence belongs to the NADPH-dependent sulphite reductase flavoprotein subunit CysJ family. In the N-terminal section; belongs to the flavodoxin family. It in the C-terminal section; belongs to the flavoprotein pyridine nucleotide cytochrome reductase family. As to quaternary structure, alpha(8)-beta(8). The alpha component is a flavoprotein, the beta component is a hemoprotein. FAD is required as a cofactor. Requires FMN as cofactor.

It carries out the reaction hydrogen sulfide + 3 NADP(+) + 3 H2O = sulfite + 3 NADPH + 4 H(+). Its pathway is sulfur metabolism; hydrogen sulfide biosynthesis; hydrogen sulfide from sulfite (NADPH route): step 1/1. Its function is as follows. Component of the sulfite reductase complex that catalyzes the 6-electron reduction of sulfite to sulfide. This is one of several activities required for the biosynthesis of L-cysteine from sulfate. The flavoprotein component catalyzes the electron flow from NADPH -&gt; FAD -&gt; FMN to the hemoprotein component. The protein is Sulfite reductase [NADPH] flavoprotein alpha-component of Photorhabdus laumondii subsp. laumondii (strain DSM 15139 / CIP 105565 / TT01) (Photorhabdus luminescens subsp. laumondii).